A 230-amino-acid chain; its full sequence is FDNSEVPILTTKKLAWKTAIKELLWIWQLKSNDVNDLNKMSVHIWDQWKQEDGTIGHAYGFQLGKKNRSLNGEKVDQVDYLLHQLKNNPSSRRHITMLWNPDELDAMALTPCVYETQWYVKHGKLHLEVRARSNDMALGNPFNVFQYNVLQRMIAQVTGYELGEYIFNIGDCHVYTRHIDNLKIQMEREQFEAPELWINPEVKDFYDFTIDDFKLINYKHGDKLLFEVPV.

92-93 lines the dUMP pocket; it reads RR. Catalysis depends on Cys-112, which acts as the Nucleophile. DUMP is bound by residues 132–135, Asn-143, and 173–175; these read RSND and HVY. Asp-135 contacts (6R)-5,10-methylene-5,6,7,8-tetrahydrofolate.

The protein belongs to the thymidylate synthase family. Bacterial-type ThyA subfamily. Homodimer.

It is found in the cytoplasm. The enzyme catalyses dUMP + (6R)-5,10-methylene-5,6,7,8-tetrahydrofolate = 7,8-dihydrofolate + dTMP. It functions in the pathway pyrimidine metabolism; dTTP biosynthesis. Functionally, catalyzes the reductive methylation of 2'-deoxyuridine-5'-monophosphate (dUMP) to 2'-deoxythymidine-5'-monophosphate (dTMP) while utilizing 5,10-methylenetetrahydrofolate (mTHF) as the methyl donor and reductant in the reaction, yielding dihydrofolate (DHF) as a by-product. This enzymatic reaction provides an intracellular de novo source of dTMP, an essential precursor for DNA biosynthesis. This Bacillus amyloliquefaciens (Bacillus velezensis) protein is Thymidylate synthase 1.